Reading from the N-terminus, the 190-residue chain is Tereporin-Ca1 (190 aa).

Residues 2-21 form an N-terminal region region; that stretch reads TAGSSLAGTTLSGLAASGYR. Gly-78, Ser-96, Pro-98, Tyr-131, and Tyr-132 together coordinate phosphocholine. The short motif at 138-140 is the Cell attachment site, crucial for protein stability element; that stretch reads KGE.

This sequence belongs to the actinoporin family. Conoidea subfamily. Octamer or nonamer in membranes. Monomer in the soluble state. In terms of tissue distribution, expressed by the venom duct.

Its subcellular location is the secreted. The protein localises to the nematocyst. The protein resides in the target cell membrane. In terms of biological role, pore-forming protein that forms pores of around 1 nm and causes cardiac stimulation and cytolysis. The protein is Tereporin-Ca1 of Terebra anilis (Auger snail).